We begin with the raw amino-acid sequence, 84 residues long: Large ribosomal subunit protein bL27 (84 aa).

The interval 1 to 22 (MAHKKGASSTRNGRDSNAQRLG) is disordered. The span at 7–19 (ASSTRNGRDSNAQ) shows a compositional bias: polar residues.

Belongs to the bacterial ribosomal protein bL27 family.

In Streptomyces coelicolor (strain ATCC BAA-471 / A3(2) / M145), this protein is Large ribosomal subunit protein bL27.